The chain runs to 544 residues: Putative lipase ATG15 (544 aa).

Topologically, residues Met-1–Ala-45 are cytoplasmic. The chain crosses the membrane as a helical; Signal-anchor for type II membrane protein span at residues Val-46–Phe-66. At Ala-67–Ala-544 the chain is on the lumenal side. Asn-200, Asn-229, and Asn-234 each carry an N-linked (GlcNAc...) asparagine glycan. The active-site Charge relay system is Ser-362. The interval Pro-508–Thr-530 is disordered.

Belongs to the AB hydrolase superfamily. Lipase family. As to quaternary structure, binds to both phosphatidylinositol (PI) and phosphatidylinositol 3,5-bisphosphate (PIP2).

The protein localises to the endosome. It is found in the multivesicular body membrane. Its subcellular location is the prevacuolar compartment membrane. It carries out the reaction a triacylglycerol + H2O = a diacylglycerol + a fatty acid + H(+). In terms of biological role, lipase which is essential for lysis of subvacuolar cytoplasm to vacuole targeted bodies and intravacuolar autophagic bodies. Involved in the lysis of intravacuolar multivesicular body (MVB) vesicles. The intravacuolar membrane disintegration by ATG15 is critical to life span extension. The polypeptide is Putative lipase ATG15 (ATG15) (Eremothecium gossypii (strain ATCC 10895 / CBS 109.51 / FGSC 9923 / NRRL Y-1056) (Yeast)).